Reading from the N-terminus, the 262-residue chain is Phosphate import ATP-binding protein PstB (262 aa).

Residues isoleucine 16–isoleucine 257 enclose the ABC transporter domain. Residue glycine 48 to serine 55 participates in ATP binding.

Belongs to the ABC transporter superfamily. Phosphate importer (TC 3.A.1.7) family. As to quaternary structure, the complex is composed of two ATP-binding proteins (PstB), two transmembrane proteins (PstC and PstA) and a solute-binding protein (PstS).

It is found in the cell inner membrane. The enzyme catalyses phosphate(out) + ATP + H2O = ADP + 2 phosphate(in) + H(+). Functionally, part of the ABC transporter complex PstSACB involved in phosphate import. Responsible for energy coupling to the transport system. This is Phosphate import ATP-binding protein PstB from Cupriavidus pinatubonensis (strain JMP 134 / LMG 1197) (Cupriavidus necator (strain JMP 134)).